We begin with the raw amino-acid sequence, 418 residues long: Serine hydroxymethyltransferase (418 aa).

(6S)-5,6,7,8-tetrahydrofolate is bound by residues L121 and 125–127; that span reads GHL. The residue at position 230 (K230) is an N6-(pyridoxal phosphate)lysine. (6S)-5,6,7,8-tetrahydrofolate contacts are provided by residues E246 and 355 to 357; that span reads SPF.

Belongs to the SHMT family. Homodimer. Requires pyridoxal 5'-phosphate as cofactor.

The protein resides in the cytoplasm. The catalysed reaction is (6R)-5,10-methylene-5,6,7,8-tetrahydrofolate + glycine + H2O = (6S)-5,6,7,8-tetrahydrofolate + L-serine. The protein operates within one-carbon metabolism; tetrahydrofolate interconversion. It participates in amino-acid biosynthesis; glycine biosynthesis; glycine from L-serine: step 1/1. In terms of biological role, catalyzes the reversible interconversion of serine and glycine with tetrahydrofolate (THF) serving as the one-carbon carrier. This reaction serves as the major source of one-carbon groups required for the biosynthesis of purines, thymidylate, methionine, and other important biomolecules. Also exhibits THF-independent aldolase activity toward beta-hydroxyamino acids, producing glycine and aldehydes, via a retro-aldol mechanism. The polypeptide is Serine hydroxymethyltransferase (Streptococcus pneumoniae (strain Hungary19A-6)).